Reading from the N-terminus, the 712-residue chain is Auxin response factor 15 (712 aa).

Residues 142–244 (FCKTLTASDT…ELRLGVRRAA (103 aa)) constitute a DNA-binding region (TF-B3).

This sequence belongs to the ARF family. Homo and heterodimers. Expressed in roots, culms, leaves and young panicles.

It is found in the nucleus. Its function is as follows. Auxin response factors (ARFs) are transcriptional factors that bind specifically to the DNA sequence 5'-TGTCTC-3' found in the auxin-responsive promoter elements (AuxREs). In Oryza sativa subsp. japonica (Rice), this protein is Auxin response factor 15 (ARF15).